We begin with the raw amino-acid sequence, 984 residues long: MORC family CW-type zinc finger protein 1 (984 aa).

Residues 284-353 (AFKDEVKKAE…RELKTARTLS (70 aa)) adopt a coiled-coil conformation. Residues 477–531 (AMGIPFIIQCDLCLKWRVLPSSTNYQEKEFFDIWICANNPNRLENSCHQVECLPS) form a CW-type zinc finger. Zn(2+) is bound by residues cysteine 486, cysteine 489, cysteine 512, and cysteine 523. Coiled-coil stretches lie at residues 737–761 (DVSLKQEKKEIPLLNQEKQELCNDV) and 900–934 (EISLGQCENKRKISEDKLKNLRIKLALLLQKLQLG).

The protein localises to the nucleus. Its function is as follows. Required for spermatogenesis. Essential for de novo DNA methylation and silencing of transposable elements in the male embryonic germ cells. This is MORC family CW-type zinc finger protein 1 from Homo sapiens (Human).